A 613-amino-acid chain; its full sequence is Autophagy-related protein 22-2 (613 aa).

A disordered region spans residues M1–A28. The chain crosses the membrane as a helical span at residues Y41 to L61. Residues G80–T96 are compositionally biased toward polar residues. Residues G80–R99 form a disordered region. N-linked (GlcNAc...) asparagine glycosylation is present at N90. 3 helical membrane passes run S120–F140, L155–I177, and C189–P209. Residues K216 to T257 are disordered. N-linked (GlcNAc...) asparagine glycosylation occurs at N226. Residues A232–T250 are compositionally biased toward basic and acidic residues. Transmembrane regions (helical) follow at residues V278–A298, I307–F327, V382–T402, and V418–V438. N448 carries an N-linked (GlcNAc...) asparagine glycan. 4 consecutive transmembrane segments (helical) span residues L453–F473, F488–G510, Y522–I544, and G553–A573. A disordered region spans residues G592–I613.

This sequence belongs to the ATG22 family.

It is found in the vacuole membrane. Its function is as follows. Vacuolar effluxer which mediate the efflux of amino acids resulting from autophagic degradation. The release of autophagic amino acids allows the maintenance of protein synthesis and viability during nitrogen starvation. This is Autophagy-related protein 22-2 (atg22-2) from Neosartorya fischeri (strain ATCC 1020 / DSM 3700 / CBS 544.65 / FGSC A1164 / JCM 1740 / NRRL 181 / WB 181) (Aspergillus fischerianus).